The following is a 345-amino-acid chain: Anthranilate phosphoribosyltransferase (345 aa).

Residues Gly86, 89-90 (GD), Thr94, 96-99 (NIST), 114-122 (KHGGRGVSS), and Ser126 contribute to the 5-phospho-alpha-D-ribose 1-diphosphate site. Gly86 provides a ligand contact to anthranilate. Position 98 (Ser98) interacts with Mg(2+). Arg172 serves as a coordination point for anthranilate. Asp231 and Glu232 together coordinate Mg(2+).

It belongs to the anthranilate phosphoribosyltransferase family. Homodimer. Mg(2+) serves as cofactor.

It carries out the reaction N-(5-phospho-beta-D-ribosyl)anthranilate + diphosphate = 5-phospho-alpha-D-ribose 1-diphosphate + anthranilate. It functions in the pathway amino-acid biosynthesis; L-tryptophan biosynthesis; L-tryptophan from chorismate: step 2/5. Its function is as follows. Catalyzes the transfer of the phosphoribosyl group of 5-phosphorylribose-1-pyrophosphate (PRPP) to anthranilate to yield N-(5'-phosphoribosyl)-anthranilate (PRA). The chain is Anthranilate phosphoribosyltransferase from Ralstonia pickettii (strain 12J).